A 2454-amino-acid polypeptide reads, in one-letter code: Probable serine/threonine-protein kinase DDB_G0277071 (2454 aa).

Residues 31–51 are compositionally biased toward low complexity; that stretch reads TSSLTTTTTTTTTTTTTTSTT. 6 disordered regions span residues 31 to 57, 206 to 265, 340 to 612, 963 to 1051, 1201 to 1330, and 1342 to 1528; these read TSSL…HESN, QQQL…QKQN, PRPP…LKIE, NNIN…NENE, SSDD…SNPL, and ISKG…SNNT. Residues 259–307 adopt a coiled-coil conformation; that stretch reads KQQQKQNSQQQQQQQQQQQQQQQQQQQQQQQQQQQQQQQQQQQKLNIHE. 2 stretches are compositionally biased toward low complexity: residues 346 to 399 and 406 to 428; these read QQHQ…NITP and PSSV…KPTS. Residues 429–444 are compositionally biased toward polar residues; sequence IGQIQSLHYHNPSLYQ. Low complexity-rich tracts occupy residues 450–461 and 475–536; these read NRNRGNNNNNNN and SSTV…NTPN. The span at 553-568 shows a compositional bias: gly residues; that stretch reads GGIGGGGGGGSGGGGI. Low complexity-rich tracts occupy residues 963–1048, 1201–1248, 1275–1284, 1299–1324, and 1346–1403; these read NNIN…TTTN, SSDD…TGGP, NSSNNNNTSS, SGSS…PTTG, and SPAS…SVST. Residues 1417 to 1441 are compositionally biased toward polar residues; sequence LNLSSVSKTGQASTSTPNLLNLKNI. The segment covering 1442–1478 has biased composition (low complexity); the sequence is PTTTNNSNSTTTTTTTTPTGKPQFSLNLSSLSKSSSS. The span at 1479-1491 shows a compositional bias: polar residues; the sequence is TETVPPSQPNQPI. Residues 1509 to 1528 are compositionally biased toward low complexity; the sequence is STTTTTTTTTPPPINNSNNT. One can recognise a Protein kinase domain in the interval 1730–2034; sequence FKDLKRVAKG…TKFIAIKPTI (305 aa). ATP contacts are provided by residues 1736–1744 and Lys1760; that span reads VAKGAYGTV. Residue Asp1858 is the Proton acceptor of the active site. The Tyrosine-protein phosphatase domain occupies 2130-2271; sequence RPSKVASFMY…LCRWGKQRRN (142 aa). The segment at 2379-2404 is disordered; the sequence is NINNNNNNNSNNSKSKQQQQQQQNQN.

The protein belongs to the protein kinase superfamily. Ser/Thr protein kinase family.

It catalyses the reaction L-seryl-[protein] + ATP = O-phospho-L-seryl-[protein] + ADP + H(+). The enzyme catalyses L-threonyl-[protein] + ATP = O-phospho-L-threonyl-[protein] + ADP + H(+). The polypeptide is Probable serine/threonine-protein kinase DDB_G0277071 (Dictyostelium discoideum (Social amoeba)).